Reading from the N-terminus, the 625-residue chain is tRNA uridine 5-carboxymethylaminomethyl modification enzyme MnmG (625 aa).

FAD is bound by residues 13–18 (GGGHAG), valine 125, and serine 182. 276–290 (GPRYCPSIEDKITRF) provides a ligand contact to NAD(+). Glutamine 373 contributes to the FAD binding site.

This sequence belongs to the MnmG family. Homodimer. Heterotetramer of two MnmE and two MnmG subunits. FAD serves as cofactor.

Its subcellular location is the cytoplasm. In terms of biological role, NAD-binding protein involved in the addition of a carboxymethylaminomethyl (cmnm) group at the wobble position (U34) of certain tRNAs, forming tRNA-cmnm(5)s(2)U34. The sequence is that of tRNA uridine 5-carboxymethylaminomethyl modification enzyme MnmG from Lactococcus lactis subsp. lactis (strain IL1403) (Streptococcus lactis).